The chain runs to 223 residues: Noggin (223 aa).

The first 26 residues, 1–26 (MDHSQCLVTIYAAAVLLGLRLQQGSC), serve as a signal peptide directing secretion. Residue Asn-61 is glycosylated (N-linked (GlcNAc...) asparagine). Disulfide bonds link Cys-146-Cys-183, Cys-169-Cys-219, Cys-175-Cys-221, and Cys-198-Cys-206.

This sequence belongs to the noggin family. In terms of assembly, homodimer.

The protein localises to the secreted. Inhibitor of bone morphogenetic proteins (BMP) signaling. Controls somitogenesis by sequestering the BMP-4 activity which in turn differentiates distinct subtypes of the mesoderm along the mediolateral axis. The sequence is that of Noggin (NOG) from Gallus gallus (Chicken).